A 360-amino-acid chain; its full sequence is Phospho-N-acetylmuramoyl-pentapeptide-transferase (360 aa).

Transmembrane regions (helical) follow at residues 26–46 (AVLS…KMIL), 73–93 (TMGG…WGDL), 94–114 (SNPY…IGFV), 132–152 (WKYF…YMIG), 168–188 (IMPQ…VGTS), 199–219 (GLAI…AWAT), 239–259 (LVIF…FNTY), 263–283 (VFMG…IAVL), 288–308 (FLLV…ILQV), and 338–358 (VIIR…VTLK).

This sequence belongs to the glycosyltransferase 4 family. MraY subfamily. Mg(2+) is required as a cofactor.

Its subcellular location is the cell inner membrane. The enzyme catalyses UDP-N-acetyl-alpha-D-muramoyl-L-alanyl-gamma-D-glutamyl-meso-2,6-diaminopimeloyl-D-alanyl-D-alanine + di-trans,octa-cis-undecaprenyl phosphate = di-trans,octa-cis-undecaprenyl diphospho-N-acetyl-alpha-D-muramoyl-L-alanyl-D-glutamyl-meso-2,6-diaminopimeloyl-D-alanyl-D-alanine + UMP. The protein operates within cell wall biogenesis; peptidoglycan biosynthesis. Its function is as follows. Catalyzes the initial step of the lipid cycle reactions in the biosynthesis of the cell wall peptidoglycan: transfers peptidoglycan precursor phospho-MurNAc-pentapeptide from UDP-MurNAc-pentapeptide onto the lipid carrier undecaprenyl phosphate, yielding undecaprenyl-pyrophosphoryl-MurNAc-pentapeptide, known as lipid I. This is Phospho-N-acetylmuramoyl-pentapeptide-transferase from Actinobacillus succinogenes (strain ATCC 55618 / DSM 22257 / CCUG 43843 / 130Z).